Reading from the N-terminus, the 112-residue chain is Putative pterin-4-alpha-carbinolamine dehydratase (112 aa).

Belongs to the pterin-4-alpha-carbinolamine dehydratase family.

It carries out the reaction (4aS,6R)-4a-hydroxy-L-erythro-5,6,7,8-tetrahydrobiopterin = (6R)-L-erythro-6,7-dihydrobiopterin + H2O. The polypeptide is Putative pterin-4-alpha-carbinolamine dehydratase (Shewanella woodyi (strain ATCC 51908 / MS32)).